We begin with the raw amino-acid sequence, 493 residues long: MSAVRRVMALASTTLPTKSGLSLWCPSSPSLARRFPARFSPIGSRIASRSLVTASFANENREFVIVGGGNAAGYAARTFVENGMADGRLCIVTKEAYAPYERPALTKAYLFPPEKKPARLPGFHTCVGGGGERQTPDWYKEKGIEVIYEDPVAGADFEKQTLTTDAGKQLKYGSLIIATGCTASRFPDKIGGHLPGVHYIREVADADSLIASLGKAKKIVIVGGGYIGMEVAAAAVAWNLDTTIVFPEDQLLQRLFTPSLAQKYEELYRQNGVKFVKGASINNLEAGSDGRVSAVKLADGSTIEADTVVIGIGAKPAIGPFETLAMNKSIGGIQVDGLFRTSTPGIFAIGDVAAFPLKIYDRMTRVEHVDHARRSAQHCVKSLLTAHTDTYDYLPYFYSRVFEYEGSPRKVWWQFFGDNVGETVEVGNFDPKIATFWIESGRLKGVLVESGSPEEFQLLPKLARSQPLVDKAKLASASSVEEALEIAQAALQS.

The N-terminal 51 residues, 1-51 (MSAVRRVMALASTTLPTKSGLSLWCPSSPSLARRFPARFSPIGSRIASRSL), are a transit peptide targeting the chloroplast and mitochondrion. Residues 68-71 (GGNA), Glu-95, Arg-102, Lys-107, and 201-202 (RE) each bind FAD. Residues 224–230 (GGYIGME), Glu-248, Arg-254, and Gly-313 each bind NAD(+). 226–230 (YIGME) is a binding site for NADP(+). Arg-254 and Gly-313 together coordinate NADP(+). Asp-351 provides a ligand contact to FAD. 367 to 368 (EH) contributes to the NAD(+) binding site. NADP(+) is bound at residue 367-368 (EH). Residue Val-369 participates in FAD binding. Arg-373 contacts L-ascorbate. Residue Tyr-398 coordinates FAD. Tyr-398 serves as a coordination point for NAD(+). Residue Tyr-398 participates in NADP(+) binding. Residue Arg-400 participates in L-ascorbate binding.

Belongs to the FAD-dependent oxidoreductase family. As to quaternary structure, interacts in vitro with TRXy. FAD is required as a cofactor.

Its subcellular location is the plastid. The protein resides in the chloroplast. The protein localises to the mitochondrion. It catalyses the reaction 2 monodehydro-L-ascorbate radical + NADH + H(+) = 2 L-ascorbate + NAD(+). It carries out the reaction 2,4,6-trinitrotoluene + NADH = 2,4,6-trinitrotoluene radical + e(-) + NAD(+). Redox regulation of the activity by thioredoxin TRXy1. Catalyzes the conversion of monodehydroascorbate (MDA) to ascorbate, oxidizing NADH in the process. Mediates phytotoxicity of 2,4,6-trinitrotoluene (TNT), an explosive and environmental pollutant, by reducing TNT and forming a nitro radical that spontaneously reacts with atmospheric oxygen, generating reactive superoxide. Can also use 1-chloro-2,4-dinitrobenzene (CDNB) as substrate, but not 1-chloro-4-nitrobenzene (CNB). In Arabidopsis thaliana (Mouse-ear cress), this protein is Monodehydroascorbate reductase, chloroplastic/mitochondrial.